A 145-amino-acid polypeptide reads, in one-letter code: uncharacterized protein (145 aa).

The chain crosses the membrane as a helical span at residues Ile4–Asn24.

It is found in the membrane. This is an uncharacterized protein from Methanocaldococcus jannaschii (strain ATCC 43067 / DSM 2661 / JAL-1 / JCM 10045 / NBRC 100440) (Methanococcus jannaschii).